We begin with the raw amino-acid sequence, 354 residues long: Fructose-bisphosphate aldolase 2 (354 aa).

Ser-50 is a D-glyceraldehyde 3-phosphate binding site. Catalysis depends on Asp-83, which acts as the Proton donor. Zn(2+)-binding residues include His-84, Asp-105, Glu-142, and His-198. Position 199 (Gly-199) interacts with dihydroxyacetone phosphate. His-232 contributes to the Zn(2+) binding site. Dihydroxyacetone phosphate contacts are provided by residues 233-235 and 275-278; these read GSS and NIDT.

It belongs to the class II fructose-bisphosphate aldolase family. Homodimer. Zn(2+) is required as a cofactor.

It carries out the reaction beta-D-fructose 1,6-bisphosphate = D-glyceraldehyde 3-phosphate + dihydroxyacetone phosphate. It participates in carbohydrate biosynthesis; Calvin cycle. It functions in the pathway carbohydrate degradation; glycolysis; D-glyceraldehyde 3-phosphate and glycerone phosphate from D-glucose: step 4/4. Catalyzes the aldol condensation of dihydroxyacetone phosphate (DHAP or glycerone-phosphate) with glyceraldehyde 3-phosphate (G3P) to form fructose 1,6-bisphosphate (FBP) in gluconeogenesis and the reverse reaction in glycolysis. This is Fructose-bisphosphate aldolase 2 (cfxB) from Cereibacter sphaeroides (Rhodobacter sphaeroides).